Consider the following 323-residue polypeptide: tRNA U34 carboxymethyltransferase (323 aa).

Carboxy-S-adenosyl-L-methionine-binding positions include K91, W105, K110, G130, 181–182 (IE), M196, Y200, and R315.

Belongs to the class I-like SAM-binding methyltransferase superfamily. CmoB family. Homotetramer.

The enzyme catalyses carboxy-S-adenosyl-L-methionine + 5-hydroxyuridine(34) in tRNA = 5-carboxymethoxyuridine(34) in tRNA + S-adenosyl-L-homocysteine + H(+). Its function is as follows. Catalyzes carboxymethyl transfer from carboxy-S-adenosyl-L-methionine (Cx-SAM) to 5-hydroxyuridine (ho5U) to form 5-carboxymethoxyuridine (cmo5U) at position 34 in tRNAs. This is tRNA U34 carboxymethyltransferase from Yersinia pestis bv. Antiqua (strain Antiqua).